The primary structure comprises 68 residues: Probable tautomerase Cj0270 (68 aa).

P2 serves as the catalytic Proton acceptor; via imino nitrogen.

This sequence belongs to the 4-oxalocrotonate tautomerase family.

This is Probable tautomerase Cj0270 from Campylobacter jejuni subsp. jejuni serotype O:2 (strain ATCC 700819 / NCTC 11168).